The sequence spans 262 residues: Phosphoribosylformylglycinamidine synthase subunit PurQ (262 aa).

Residues 2 to 238 enclose the Glutamine amidotransferase type-1 domain; sequence RIAVIQFPGT…FAWQLPRKHP (237 aa). Cys-87 (nucleophile) is an active-site residue. Catalysis depends on residues His-223 and Glu-225.

As to quaternary structure, part of the FGAM synthase complex composed of 1 PurL, 1 PurQ and 2 PurS subunits.

It is found in the cytoplasm. The catalysed reaction is N(2)-formyl-N(1)-(5-phospho-beta-D-ribosyl)glycinamide + L-glutamine + ATP + H2O = 2-formamido-N(1)-(5-O-phospho-beta-D-ribosyl)acetamidine + L-glutamate + ADP + phosphate + H(+). The enzyme catalyses L-glutamine + H2O = L-glutamate + NH4(+). The protein operates within purine metabolism; IMP biosynthesis via de novo pathway; 5-amino-1-(5-phospho-D-ribosyl)imidazole from N(2)-formyl-N(1)-(5-phospho-D-ribosyl)glycinamide: step 1/2. Its function is as follows. Part of the phosphoribosylformylglycinamidine synthase complex involved in the purines biosynthetic pathway. Catalyzes the ATP-dependent conversion of formylglycinamide ribonucleotide (FGAR) and glutamine to yield formylglycinamidine ribonucleotide (FGAM) and glutamate. The FGAM synthase complex is composed of three subunits. PurQ produces an ammonia molecule by converting glutamine to glutamate. PurL transfers the ammonia molecule to FGAR to form FGAM in an ATP-dependent manner. PurS interacts with PurQ and PurL and is thought to assist in the transfer of the ammonia molecule from PurQ to PurL. In Methanothrix thermoacetophila (strain DSM 6194 / JCM 14653 / NBRC 101360 / PT) (Methanosaeta thermophila), this protein is Phosphoribosylformylglycinamidine synthase subunit PurQ.